Consider the following 255-residue polypeptide: Small ribosomal subunit protein uS2 (255 aa).

The tract at residues 226–255 (QGVSNEEVAAEQNIDLDEKEKSEETEATEE) is disordered.

It belongs to the universal ribosomal protein uS2 family.

The sequence is that of Small ribosomal subunit protein uS2 from Staphylococcus aureus (strain JH1).